We begin with the raw amino-acid sequence, 184 residues long: Ribosome-recycling factor (184 aa).

The protein belongs to the RRF family.

Its subcellular location is the cytoplasm. In terms of biological role, responsible for the release of ribosomes from messenger RNA at the termination of protein biosynthesis. May increase the efficiency of translation by recycling ribosomes from one round of translation to another. This is Ribosome-recycling factor from Acinetobacter baylyi (strain ATCC 33305 / BD413 / ADP1).